Reading from the N-terminus, the 246-residue chain is Ubiquinone biosynthesis O-methyltransferase (246 aa).

Positions 44, 63, 84, and 128 each coordinate S-adenosyl-L-methionine.

This sequence belongs to the methyltransferase superfamily. UbiG/COQ3 family.

The catalysed reaction is a 3-demethylubiquinol + S-adenosyl-L-methionine = a ubiquinol + S-adenosyl-L-homocysteine + H(+). It catalyses the reaction a 3-(all-trans-polyprenyl)benzene-1,2-diol + S-adenosyl-L-methionine = a 2-methoxy-6-(all-trans-polyprenyl)phenol + S-adenosyl-L-homocysteine + H(+). The protein operates within cofactor biosynthesis; ubiquinone biosynthesis. Functionally, O-methyltransferase that catalyzes the 2 O-methylation steps in the ubiquinone biosynthetic pathway. The chain is Ubiquinone biosynthesis O-methyltransferase from Xylella fastidiosa (strain Temecula1 / ATCC 700964).